A 376-amino-acid chain; its full sequence is N-acetyldiaminopimelate deacetylase (376 aa).

The active site involves aspartate 69. Residue glutamate 128 is the Proton acceptor of the active site.

The protein belongs to the peptidase M20A family. N-acetyldiaminopimelate deacetylase subfamily.

The catalysed reaction is N-acetyl-(2S,6S)-2,6-diaminopimelate + H2O = (2S,6S)-2,6-diaminopimelate + acetate. It participates in amino-acid biosynthesis; L-lysine biosynthesis via DAP pathway; LL-2,6-diaminopimelate from (S)-tetrahydrodipicolinate (acetylase route): step 3/3. In terms of biological role, catalyzes the conversion of N-acetyl-diaminopimelate to diaminopimelate and acetate. This Streptococcus uberis (strain ATCC BAA-854 / 0140J) protein is N-acetyldiaminopimelate deacetylase.